We begin with the raw amino-acid sequence, 438 residues long: Putative hydroxypyruvate reductase (438 aa).

The catalysed reaction is (R)-glycerate + NAD(+) = 3-hydroxypyruvate + NADH + H(+). It catalyses the reaction (R)-glycerate + NADP(+) = 3-hydroxypyruvate + NADPH + H(+). It participates in carbohydrate acid metabolism; tartrate degradation; 3-hydroxypyruvate from D-glycerate: step 1/1. In terms of biological role, degrades an unidentified toxic product from the first step of tartrate degradation. The protein is Putative hydroxypyruvate reductase (ttuD) of Agrobacterium vitis (Rhizobium vitis).